The primary structure comprises 674 residues: Sodium/myo-inositol cotransporter 2 (674 aa).

Over 1 to 27 (MESSPSSPQPTQSDPLAVFPQRTLEPA) the chain is Extracellular. The helical transmembrane segment at 28–48 (DIAVLVLYFLFVLAVGLWSTV) threads the bilayer. The Cytoplasmic portion of the chain corresponds to 49 to 56 (KTRRDTVK). The helical transmembrane segment at 57-77 (GYFLAGGDMVWWPVGASLFAS) threads the bilayer. Over 78–102 (NVGSGHFVGLAGSGAAAGLSVTAYE) the chain is Extracellular. A helical transmembrane segment spans residues 103-123 (FNGIFSVLMLAWIFLPIYIAG). Over 124–140 (QVTTMPEYLRKRFGGSR) the chain is Cytoplasmic. A helical transmembrane segment spans residues 141 to 161 (IPITLAVLYLFIYIFTKISVD). At 162–180 (MYAGAIFIQQSLHLNLYLA) the chain is on the extracellular side. Residues 181–201 (IVGLLAITALYTIAGGLAAVI) form a helical membrane-spanning segment. The Cytoplasmic segment spans residues 202–208 (YTDALQT). The helical transmembrane segment at 209–229 (LIMLIGALTLMGYSFAAVGGM) threads the bilayer. Topologically, residues 230 to 272 (EGLKEKYFLALASNRSGNSSCGLPREDAFHIFRDPLTSDLPWP) are extracellular. Residues 273 to 293 (GILFGMSIPSLWYWCTDQVIV) traverse the membrane as a helical segment. At 294-308 (QRTLAAKNLSHAKGG) the chain is on the cytoplasmic side. A helical membrane pass occupies residues 309-329 (SLMAAYLKVLPLFIMVFPGMV). The Extracellular segment spans residues 330–374 (SRVLFPDQVACADPEICQKVCSNPAGCSDIAYPKLVLELLPMGLR). Residues 375 to 397 (GLMMAVMVAALMSSLTSIFNSAS) traverse the membrane as a helical segment. Residues 398 to 418 (TIFTMDLWNHLRPRASERELM) lie on the Cytoplasmic side of the membrane. The helical transmembrane segment at 419 to 439 (IVGRVFVLLLVLVSILWIPVV) threads the bilayer. The Extracellular portion of the chain corresponds to 440 to 446 (QASQGGQ). Residues 447–467 (LFIYIQSISSYLQPPVAVVFI) traverse the membrane as a helical segment. At 468-479 (MGCFWKRTNEKG) the chain is on the cytoplasmic side. Residues 480–500 (AFSGLILGLLLGLVRLVLDFI) traverse the membrane as a helical segment. At 501 to 518 (YPQPRCDQPDERPAVVRD) the chain is on the extracellular side. A helical transmembrane segment spans residues 519–539 (VHYLYFSMILSSVTLVTVSTV). Residues 540 to 653 (SWCTAPPTQE…SLEEIPLVKT (114 aa)) are Cytoplasmic-facing. Residues 654–674 (LLDINLIVCISCAIFLWGYFA) form a helical membrane-spanning segment.

This sequence belongs to the sodium:solute symporter (SSF) (TC 2.A.21) family.

The protein resides in the membrane. It localises to the apical cell membrane. The enzyme catalyses myo-inositol(out) + 2 Na(+)(out) = myo-inositol(in) + 2 Na(+)(in). It carries out the reaction 1D-chiro-inositol(out) + 2 Na(+)(out) = 1D-chiro-inositol(in) + 2 Na(+)(in). It catalyses the reaction D-glucose(out) + 2 Na(+)(out) = D-glucose(in) + 2 Na(+)(in). The catalysed reaction is D-xylose(out) + 2 Na(+)(out) = D-xylose(in) + 2 Na(+)(in). Its activity is regulated as follows. MI transport activity inhibited by D-chiro-inositol (DCI), phlorizin (Pz) and sodium (Na(+)). Insulin increases D-chiro-inositol uptake. Its function is as follows. Involved in the sodium-dependent cotransport of myo-inositol (MI) with a Na(+):MI stoichiometry of 2:1. Exclusively responsible for apical MI transport and absorption in intestine. Can also transport D-chiro-inositol (DCI) but not L-fucose. Exhibits stereospecific cotransport of both D-glucose and D-xylose. May induce apoptosis through the TNF-alpha, PDCD1 pathway. May play a role in the regulation of MI concentration in serum, involving reabsorption in at least the proximal tubule of the kidney. The sequence is that of Sodium/myo-inositol cotransporter 2 from Sus scrofa (Pig).